The chain runs to 279 residues: MATH domain and coiled-coil domain-containing protein At1g31390 (279 aa).

The 129-residue stretch at Glu6–Val134 folds into the MATH domain. Positions Lys235–Asp271 form a coiled coil.

The sequence is that of MATH domain and coiled-coil domain-containing protein At1g31390 from Arabidopsis thaliana (Mouse-ear cress).